The chain runs to 630 residues: tRNA uridine 5-carboxymethylaminomethyl modification enzyme MnmG (630 aa).

An FAD-binding site is contributed by 13–18 (GGGHAG). An NAD(+)-binding site is contributed by 273-287 (GPRYCPSIEDKIHRF).

Belongs to the MnmG family. Homodimer. Heterotetramer of two MnmE and two MnmG subunits. FAD serves as cofactor.

It localises to the cytoplasm. In terms of biological role, NAD-binding protein involved in the addition of a carboxymethylaminomethyl (cmnm) group at the wobble position (U34) of certain tRNAs, forming tRNA-cmnm(5)s(2)U34. This is tRNA uridine 5-carboxymethylaminomethyl modification enzyme MnmG from Pseudomonas aeruginosa (strain ATCC 15692 / DSM 22644 / CIP 104116 / JCM 14847 / LMG 12228 / 1C / PRS 101 / PAO1).